A 400-amino-acid polypeptide reads, in one-letter code: Probable peptidoglycan glycosyltransferase FtsW (400 aa).

The next 11 membrane-spanning stretches (helical) occupy residues 30–50, 65–84, 92–112, 123–143, 157–177, 179–199, 201–221, 247–267, 280–300, 321–341, and 356–376; these read LSVL…SIGI, QAAY…RIRL, GLLL…GVGV, LGLF…LYLA, FAGF…LLME, DFGA…LAGA, LWQF…LAIT, TQSL…GASV, FLFA…VVLL, LFGA…AFIN, and LPLM…VGLL.

The protein belongs to the SEDS family. FtsW subfamily.

It localises to the cell inner membrane. It catalyses the reaction [GlcNAc-(1-&gt;4)-Mur2Ac(oyl-L-Ala-gamma-D-Glu-L-Lys-D-Ala-D-Ala)](n)-di-trans,octa-cis-undecaprenyl diphosphate + beta-D-GlcNAc-(1-&gt;4)-Mur2Ac(oyl-L-Ala-gamma-D-Glu-L-Lys-D-Ala-D-Ala)-di-trans,octa-cis-undecaprenyl diphosphate = [GlcNAc-(1-&gt;4)-Mur2Ac(oyl-L-Ala-gamma-D-Glu-L-Lys-D-Ala-D-Ala)](n+1)-di-trans,octa-cis-undecaprenyl diphosphate + di-trans,octa-cis-undecaprenyl diphosphate + H(+). It participates in cell wall biogenesis; peptidoglycan biosynthesis. Peptidoglycan polymerase that is essential for cell division. The sequence is that of Probable peptidoglycan glycosyltransferase FtsW from Thioalkalivibrio sulfidiphilus (strain HL-EbGR7).